The chain runs to 940 residues: Isoleucine--tRNA ligase (940 aa).

Positions 58–68 (PYANGAIHIGH) match the 'HIGH' region motif. Glu-564 contributes to the L-isoleucyl-5'-AMP binding site. Residues 605 to 609 (KMSKS) carry the 'KMSKS' region motif. Lys-608 is an ATP binding site. Positions 903, 906, 923, and 926 each coordinate Zn(2+).

This sequence belongs to the class-I aminoacyl-tRNA synthetase family. IleS type 1 subfamily. In terms of assembly, monomer. The cofactor is Zn(2+).

Its subcellular location is the cytoplasm. The enzyme catalyses tRNA(Ile) + L-isoleucine + ATP = L-isoleucyl-tRNA(Ile) + AMP + diphosphate. Catalyzes the attachment of isoleucine to tRNA(Ile). As IleRS can inadvertently accommodate and process structurally similar amino acids such as valine, to avoid such errors it has two additional distinct tRNA(Ile)-dependent editing activities. One activity is designated as 'pretransfer' editing and involves the hydrolysis of activated Val-AMP. The other activity is designated 'posttransfer' editing and involves deacylation of mischarged Val-tRNA(Ile). The protein is Isoleucine--tRNA ligase of Nitrosococcus oceani (strain ATCC 19707 / BCRC 17464 / JCM 30415 / NCIMB 11848 / C-107).